A 232-amino-acid polypeptide reads, in one-letter code: Orotate phosphoribosyltransferase (232 aa).

Lysine 28 is a binding site for 5-phospho-alpha-D-ribose 1-diphosphate. Residue 36–37 (FF) coordinates orotate. 5-phospho-alpha-D-ribose 1-diphosphate-binding positions include 78 to 79 (YK), arginine 108, lysine 109, lysine 112, histidine 114, and 134 to 142 (DDVITAGTA). Orotate contacts are provided by threonine 138 and arginine 166.

The protein belongs to the purine/pyrimidine phosphoribosyltransferase family. PyrE subfamily. Homodimer.

It carries out the reaction orotidine 5'-phosphate + diphosphate = orotate + 5-phospho-alpha-D-ribose 1-diphosphate. Its pathway is pyrimidine metabolism; UMP biosynthesis via de novo pathway; UMP from orotate: step 1/2. Catalyzes the transfer of a ribosyl phosphate group from 5-phosphoribose 1-diphosphate to orotate, leading to the formation of orotidine monophosphate (OMP). The chain is Orotate phosphoribosyltransferase (URA5) from Sordaria macrospora.